A 408-amino-acid chain; its full sequence is Dual-specificity RNA methyltransferase RlmN (408 aa).

E126 (proton acceptor) is an active-site residue. The 242-residue stretch at 132–373 (EEGRGTLCLS…NQAGYASPIR (242 aa)) folds into the Radical SAM core domain. A disulfide bond links C139 and C384. 3 residues coordinate [4Fe-4S] cluster: C146, C150, and C153. Residues 210–211 (GE), S242, 264–266 (SLH), and N341 contribute to the S-adenosyl-L-methionine site. Catalysis depends on C384, which acts as the S-methylcysteine intermediate.

It belongs to the radical SAM superfamily. RlmN family. [4Fe-4S] cluster serves as cofactor.

The protein resides in the cytoplasm. The catalysed reaction is adenosine(2503) in 23S rRNA + 2 reduced [2Fe-2S]-[ferredoxin] + 2 S-adenosyl-L-methionine = 2-methyladenosine(2503) in 23S rRNA + 5'-deoxyadenosine + L-methionine + 2 oxidized [2Fe-2S]-[ferredoxin] + S-adenosyl-L-homocysteine. The enzyme catalyses adenosine(37) in tRNA + 2 reduced [2Fe-2S]-[ferredoxin] + 2 S-adenosyl-L-methionine = 2-methyladenosine(37) in tRNA + 5'-deoxyadenosine + L-methionine + 2 oxidized [2Fe-2S]-[ferredoxin] + S-adenosyl-L-homocysteine. Specifically methylates position 2 of adenine 2503 in 23S rRNA and position 2 of adenine 37 in tRNAs. m2A2503 modification seems to play a crucial role in the proofreading step occurring at the peptidyl transferase center and thus would serve to optimize ribosomal fidelity. This Bartonella henselae (strain ATCC 49882 / DSM 28221 / CCUG 30454 / Houston 1) (Rochalimaea henselae) protein is Dual-specificity RNA methyltransferase RlmN.